Here is a 226-residue protein sequence, read N- to C-terminus: Protein BASIC PENTACYSTEINE7 (226 aa).

The interval 42–116 is disordered; the sequence is IDLSQEPPAE…PSIPETKREK (75 aa). The segment covering 66–76 has biased composition (basic and acidic residues); the sequence is RDSRNDTETVK. Residues 88–105 show a composition bias toward basic residues; it reads LKPKPQRKKRSVSNKSKK.

This sequence belongs to the BBR/BPC family. In terms of tissue distribution, expressed in seedlings, leaves and pistils. Detected in anthers, in pollen grains, in young rosette, in leaf vasculature, in the lateral and primary roots, in embryo sac, and in the whole ovule.

Its subcellular location is the nucleus. In terms of biological role, transcriptional regulator that specifically binds to GA-rich elements (GAGA-repeats) present in regulatory sequences of genes involved in developmental processes. This chain is Protein BASIC PENTACYSTEINE7 (BPC7), found in Arabidopsis thaliana (Mouse-ear cress).